Consider the following 341-residue polypeptide: SH3 domain-containing YSC84-like protein 1 (341 aa).

The disordered stretch occupies residues 221–265 (VNARRAAREQKKASAKLPPKPSSRPEQSSAQVQLSSGSQSSRNEY). Polar residues predominate over residues 246-264 (EQSSAQVQLSSGSQSSRNE). The SH3 domain maps to 282 to 341 (NQPIEVTALYSFEGQQPGDLNFQAGDRITVISKTDSHFDWWEGKLRGRTGIFPANYVTMN).

It belongs to the SH3YL1 family. Interacts with SH3D19.

The polypeptide is SH3 domain-containing YSC84-like protein 1 (SH3YL1) (Bos taurus (Bovine)).